The primary structure comprises 357 residues: Uroporphyrinogen decarboxylase (357 aa).

Residues 27-31 (RQAGR), Asp77, Tyr154, Thr209, and His327 contribute to the substrate site.

The protein belongs to the uroporphyrinogen decarboxylase family. In terms of assembly, homodimer.

It is found in the cytoplasm. The enzyme catalyses uroporphyrinogen III + 4 H(+) = coproporphyrinogen III + 4 CO2. It participates in porphyrin-containing compound metabolism; protoporphyrin-IX biosynthesis; coproporphyrinogen-III from 5-aminolevulinate: step 4/4. In terms of biological role, catalyzes the decarboxylation of four acetate groups of uroporphyrinogen-III to yield coproporphyrinogen-III. The protein is Uroporphyrinogen decarboxylase of Proteus mirabilis (strain HI4320).